The primary structure comprises 1174 residues: Pesticidal crystal protein Cry1Fa (1174 aa).

Belongs to the delta endotoxin family.

Functionally, promotes colloidosmotic lysis by binding to the midgut epithelial cells of many lepidopteran larvae. The sequence is that of Pesticidal crystal protein Cry1Fa (cry1Fa) from Bacillus thuringiensis subsp. aizawai.